A 149-amino-acid chain; its full sequence is MTANFSTHVFSPQHCGCDRLTSIDDVRQCLTEYIYWSSYAYRNRQCAGQLYDTLLSFKDDAESVFIDVRELVKNMPWDNVKDCTEIIRCYIPDEQKTIREISAIIGLCAYAATYWGGEDHPTSNSLNALFVMLEMLNYMDYTIIFWRMN.

The protein belongs to the orthopoxvirus OPG200 family. In terms of assembly, homodimers. Interacts with host IKBKB; this interaction inhibits host NF-kappa-B activation.

In terms of biological role, contributes to virulence by binding to the host IKBKB subunit of the IKK complex and preventing host NF-kappa-B activation in response to pro-inflammatory stimuli such as TNF-alpha or IL1B. Mechanistically, sterically hinders the direct contact between the kinase domains of IKBKB in the IKK complex containing IKBKB, CHUK/IKKA and NEMO. The chain is Protein OPG200 (OPG200) from Cynomys gunnisoni (Gunnison's prairie dog).